A 479-amino-acid polypeptide reads, in one-letter code: MSDGFDRAPGAGRGRSRGLGRGGGGPEGGGFPNGAGPAERARHQPPQPKAPGFLQPPPLRQPRTTPPPGAQCEVPASPQRPSRPGALPEQTRPLRAPPSSQDKIPQQNSESAMAKPQVVVAPVLMSKLSVNAPEFYPSGYSSSYTESYEDGCEDYPTLSEYVQDFLNHLTEQPGSFETEIEQFAETLNGCVTTDDALQELVELIYQQATSIPNFSYMGARLCNYLSHHLTISPQSGNFRQLLLQRCRTEYEVKDQAAKGDEVTRKRFHAFVLFLGELYLNLEIKGTNGQVTRADILQVGLRELLNALFSNPMDDNLICAVKLLKLTGSVLEDAWKEKGKMDMEEIIQRIENVVLDANCSRDVKQMLLKLVELRSSNWGRVHATSTYREATPENDPNYFMNEPTFYTSDGVPFTAADPDYQEKYQELLEREDFFPDYEENGTDLSGAGDPYLDDIDDEMDPEIEEAYEKFCLESERKRKQ.

The interval 1–114 (MSDGFDRAPG…PQQNSESAMA (114 aa)) is disordered. Ser2 is subject to N-acetylalanine. Residues 11 to 33 (AGRGRSRGLGRGGGGPEGGGFPN) show a composition bias toward gly residues. Omega-N-methylarginine is present on Arg21. Residues 45–69 (PPQPKAPGFLQPPPLRQPRTTPPPG) show a composition bias toward pro residues. The span at 98–111 (PSSQDKIPQQNSES) shows a compositional bias: polar residues. Positions 116–143 (PQVVVAPVLMSKLSVNAPEFYPSGYSSS) are PABPC1-interacting motif-2 (PAM2). Residues 157–375 (TLSEYVQDFL…LLKLVELRSS (219 aa)) form a PAIP1 middle domain (PAIP1M) region. The region spanning 159–376 (SEYVQDFLNH…LKLVELRSSN (218 aa)) is the MIF4G domain. The interval 435-455 (DYEENGTDLSGAGDPYLDDID) is disordered. The tract at residues 440 to 479 (GTDLSGAGDPYLDDIDDEMDPEIEEAYEKFCLESERKRKQ) is PABPC1-interacting motif-1 (PAM1).

As to quaternary structure, interacts with the RRM1-RRM2 and C-terminus regions of PABPC1 in a 1:1 stoichiometry. Interacts with EIF4A. (Microbial infection) Interacts (via PAIP1M) with human SARS coronaviruses SARS-COV and SARS-COV-2 NSP3 protein (via SARS-unique domain); the interaction increases binding affinity with PABPC1.

The protein localises to the cytoplasm. In terms of biological role, acts as a coactivator in the regulation of translation initiation of poly(A)-containing mRNAs. Its stimulatory activity on translation is mediated via its action on PABPC1. Competes with PAIP2 for binding to PABPC1. Its association with EIF4A and PABPC1 may potentiate contacts between mRNA termini. May also be involved in translationally coupled mRNA turnover. Implicated with other RNA-binding proteins in the cytoplasmic deadenylation/translational and decay interplay of the FOS mRNA mediated by the major coding-region determinant of instability (mCRD) domain. (Microbial infection) Upon interaction with SARS coronavirus SARS-CoV NSP3 protein, plays an important role in viral protein synthesis. The polypeptide is Polyadenylate-binding protein-interacting protein 1 (Homo sapiens (Human)).